The chain runs to 213 residues: ATP synthase peripheral stalk subunit OSCP, mitochondrial (213 aa).

A mitochondrion-targeting transit peptide spans M1–P23. Residues A5–P23 carry the SIFI-degron motif. N6-acetyllysine is present on residues K54, K60, K70, and K73. K90 is subject to N6-succinyllysine. N6-acetyllysine; alternate occurs at positions 100, 158, and 162. N6-succinyllysine; alternate occurs at positions 100, 158, and 162. Residues K172, K176, and K192 each carry the N6-acetyllysine modification. K199 bears the N6-succinyllysine mark.

It belongs to the ATPase delta chain family. As to quaternary structure, component of the ATP synthase complex composed at least of ATP5F1A/subunit alpha, ATP5F1B/subunit beta, ATP5MC1/subunit c (homooctomer), MT-ATP6/subunit a, MT-ATP8/subunit 8, ATP5ME/subunit e, ATP5MF/subunit f, ATP5MG/subunit g, ATP5MK/subunit k, ATP5MJ/subunit j, ATP5F1C/subunit gamma, ATP5F1D/subunit delta, ATP5F1E/subunit epsilon, ATP5PF/subunit F6, ATP5PB/subunit b, ATP5PD/subunit d, ATP5PO/subunit OSCP. ATP synthase complex consists of a soluble F(1) head domain (subunits alpha(3) and beta(3)) - the catalytic core - and a membrane F(0) domain - the membrane proton channel (subunits c, a, 8, e, f, g, k and j). These two domains are linked by a central stalk (subunits gamma, delta, and epsilon) rotating inside the F1 region and a stationary peripheral stalk (subunits F6, b, d, and OSCP). Acetylation of Lys-70 and Lys-158 is observed in liver mitochondria from fasted mice but not from fed mice. In terms of processing, acetylation at Lys-162 decreases ATP production. Deacetylated by SIRT3. Post-translationally, in response to mitochondrial stress, the precursor protein is ubiquitinated by the SIFI complex in the cytoplasm before mitochondrial import, leading to its degradation. Within the SIFI complex, UBR4 initiates ubiquitin chain that are further elongated or branched by KCMF1.

It is found in the mitochondrion. The protein resides in the mitochondrion inner membrane. Functionally, subunit OSCP, of the mitochondrial membrane ATP synthase complex (F(1)F(0) ATP synthase or Complex V) that produces ATP from ADP in the presence of a proton gradient across the membrane which is generated by electron transport complexes of the respiratory chain. ATP synthase complex consist of a soluble F(1) head domain - the catalytic core - and a membrane F(1) domain - the membrane proton channel. These two domains are linked by a central stalk rotating inside the F(1) region and a stationary peripheral stalk. During catalysis, ATP synthesis in the catalytic domain of F(1) is coupled via a rotary mechanism of the central stalk subunits to proton translocation. In vivo, can only synthesize ATP although its ATP hydrolase activity can be activated artificially in vitro. Part of the complex F(0) domain. Part of the complex F(0) domain and the peripheric stalk, which acts as a stator to hold the catalytic alpha(3)beta(3) subcomplex and subunit a/ATP6 static relative to the rotary elements. The chain is ATP synthase peripheral stalk subunit OSCP, mitochondrial from Mus musculus (Mouse).